The sequence spans 992 residues: Leucine-rich repeat receptor-like serine/threonine-protein kinase BAM3 (992 aa).

An N-terminal signal peptide occupies residues Met-1–Ser-21. Over Ser-22–Lys-656 the chain is Extracellular. Asn-28 carries an N-linked (GlcNAc...) asparagine glycan. Cys-64 and Cys-71 are oxidised to a cystine. Residues Asn-75 and Asn-87 are each glycosylated (N-linked (GlcNAc...) asparagine). 6 LRR repeats span residues Asn-75–Leu-99, Ser-100–Leu-124, Gly-126–Gln-148, Thr-150–Leu-173, Thr-174–Ser-199, and Lys-201–Ile-221. 2 N-linked (GlcNAc...) asparagine glycosylation sites follow: Asn-131 and Asn-163. N-linked (GlcNAc...) asparagine glycosylation occurs at Asn-220. A CLE45 peptide binding motif is present at residues Gln-226–Tyr-231. LRR repeat units follow at residues Leu-246 to Leu-270, Lys-271 to Met-294, Ser-296 to Lys-320, Gln-322 to Leu-342, Pro-343 to Asn-366, Asn-368 to Arg-391, Leu-393 to Cys-414, Glu-415 to Leu-438, Pro-439 to Asn-462, Phe-465 to Leu-489, Ser-491 to Leu-513, Lys-514 to Asp-536, Cys-537 to Ile-561, Ile-563 to Met-585, and Lys-586 to Tyr-610. 2 N-linked (GlcNAc...) asparagine glycosylation sites follow: Asn-256 and Asn-293. N-linked (GlcNAc...) asparagine glycosylation is present at Asn-354. N-linked (GlcNAc...) asparagine glycosylation is found at Asn-440 and Asn-472. An N-linked (GlcNAc...) asparagine glycan is attached at Asn-525. N-linked (GlcNAc...) asparagine glycans are attached at residues Asn-568, Asn-575, Asn-597, Asn-613, Asn-631, and Asn-635. A helical transmembrane segment spans residues Phe-657–Val-677. At Val-678–Phe-992 the chain is on the cytoplasmic side. The Protein kinase domain occupies Val-710–Phe-992. Residues Ile-716–Val-724 and Lys-738 each bind ATP. Residue Asp-836 is the Proton acceptor of the active site.

Belongs to the protein kinase superfamily. Ser/Thr protein kinase family. In terms of assembly, interacts with CLE45, especially in roots. Binds to the dimer CLV2/CRN. Expressed in seedlings, roots, leaves, stems, inflorescences, flowers and siliques. In roots, confined to protophloem and sieve element precursor cells.

The protein localises to the cell membrane. The protein resides in the endoplasmic reticulum membrane. The enzyme catalyses L-seryl-[protein] + ATP = O-phospho-L-seryl-[protein] + ADP + H(+). It catalyses the reaction L-threonyl-[protein] + ATP = O-phospho-L-threonyl-[protein] + ADP + H(+). In terms of biological role, necessary for male gametophyte development, as well as ovule specification and function. Required for the development of high-ordered vascular strands within the leaf and a correlated control of leaf shape, size and symmetry. LRR-rich receptor-like kinase (LRR-RLK) involved in the perception of CLE45 peptide ligand which mediates root growth inhibition by repressing protophloem differentiation; this mechanism requires CRN. BRX, BAM3, and CLE45 act together to regulate the transition of protophloem cells from proliferation to differentiation, thus impinging on postembryonic growth capacity of the root meristem. Necessary for CLE45 peptide-triggered accumulation of MAKR5 in developing sieve elements. The polypeptide is Leucine-rich repeat receptor-like serine/threonine-protein kinase BAM3 (Arabidopsis thaliana (Mouse-ear cress)).